A 134-amino-acid polypeptide reads, in one-letter code: Proline-rich protein 4 (134 aa).

Residues 1–16 (MLLVLLSVVLLALSSA) form the signal peptide. The interval 28–134 (FTFTIPDVED…ARHPQEQPLW (107 aa)) is disordered. Residues 47–59 (QRPPPEGLLPRPP) are compositionally biased toward pro residues. Positions 110-119 (VSLQEASSFF) are enriched in polar residues. Residues 120 to 134 (QRDRPARHPQEQPLW) are compositionally biased toward basic and acidic residues.

Abundantly expressed in lacrimal gland where it is found in the acinar cells but not in the intralobular ducts. Also found in the submandibular gland, the parotid and sublingual glands.

The protein resides in the secreted. The polypeptide is Proline-rich protein 4 (PRR4) (Homo sapiens (Human)).